The chain runs to 1020 residues: Sodium/potassium-transporting ATPase subunit alpha-2 (1020 aa).

Positions 1 to 5 (MGRGA) are excised as a propeptide. Residues 1–31 (MGRGAGREYSPAATTAENGGGKKKQKEKELD) form a disordered region. Over 6–85 (GREYSPAATT…NALTPPPTTP (80 aa)) the chain is Cytoplasmic. Ser-10 carries the phosphoserine modification. The interaction with phosphoinositide-3 kinase stretch occupies residues 80-82 (PPP). The chain crosses the membrane as a helical span at residues 86-106 (EWVKFCRQLFGGFSILLWIGA). The Extracellular portion of the chain corresponds to 107–129 (ILCFLAFGIQAAMEDEPSNDNLY). The helical transmembrane segment at 130-150 (LGVVLAAVVIVTGCFSYYQEA) threads the bilayer. Residues 151 to 286 (KSSKIMDSFK…VGRTPIAMEI (136 aa)) lie on the Cytoplasmic side of the membrane. Over residues 212 to 227 (DNSSLTGESEPQTRSP) the composition is skewed to polar residues. The segment at 212–231 (DNSSLTGESEPQTRSPEFTH) is disordered. A helical transmembrane segment spans residues 287–306 (EHFIQLITGVAVFLGVSFFV). The Extracellular segment spans residues 307–318 (LSLILGYSWLEA). A helical membrane pass occupies residues 319 to 336 (VIFLIGIIVANVPEGLLA). The Cytoplasmic portion of the chain corresponds to 337 to 769 (TVTVCLTLTA…EEGRLIFDNL (433 aa)). Asp-374 (4-aspartylphosphate intermediate) is an active-site residue. Phosphoserine occurs at positions 439, 450, 496, and 559. Position 570 is a phosphothreonine (Thr-570). Phosphoserine is present on residues Ser-587 and Ser-672. Residues Asp-714 and Asp-718 each contribute to the Mg(2+) site. A helical membrane pass occupies residues 770–789 (KKSIAYTLTSNIPEITPFLL). The Extracellular portion of the chain corresponds to 790-799 (FIIANIPLPL). A helical membrane pass occupies residues 800–820 (GTVTILCIDLGTDMVPAISLA). At 821–840 (YEAAESDIMKRQPRNPQTDK) the chain is on the cytoplasmic side. Ser-826 is modified (phosphoserine). Residues 841–863 (LVNERLISMAYGQIGMIQALGGF) traverse the membrane as a helical segment. Residues 864–915 (FTYFVILAENGFLPSRLLGIRLDWDDRSMNDLEDSYGQEWTYEQRKVVEFTC) lie on the Extracellular side of the membrane. The chain crosses the membrane as a helical span at residues 916–935 (HTAFFASIVVVQWADLIICK). At 936–948 (TRRNSVFQQGMKN) the chain is on the cytoplasmic side. The residue at position 940 (Ser-940) is a Phosphoserine; by PKA. The chain crosses the membrane as a helical span at residues 949–967 (KILIFGLLEETALAAFLSY). Residues 968-982 (CPGMGVALRMYPLKV) are Extracellular-facing. A helical transmembrane segment spans residues 983 to 1003 (TWWFCAFPYSLLIFIYDEVRK). The Cytoplasmic portion of the chain corresponds to 1004–1020 (LILRRYPGGWVEKETYY).

The protein belongs to the cation transport ATPase (P-type) (TC 3.A.3) family. Type IIC subfamily. In terms of assembly, the sodium/potassium-transporting ATPase is composed of a catalytic alpha subunit, an auxiliary non-catalytic beta subunit and an additional regulatory subunit. Interacts with regulatory subunit FXYD1.

Its subcellular location is the membrane. The protein resides in the cell membrane. It carries out the reaction K(+)(out) + Na(+)(in) + ATP + H2O = K(+)(in) + Na(+)(out) + ADP + phosphate + H(+). This is the catalytic component of the active enzyme, which catalyzes the hydrolysis of ATP coupled with the exchange of sodium and potassium ions across the plasma membrane. This action creates the electrochemical gradient of sodium and potassium, providing the energy for active transport of various nutrients. The protein is Sodium/potassium-transporting ATPase subunit alpha-2 (ATP1A2) of Bos taurus (Bovine).